Here is a 229-residue protein sequence, read N- to C-terminus: Cytidylate kinase (229 aa).

Residue 12–20 (GPSGAGKGT) participates in ATP binding.

Belongs to the cytidylate kinase family. Type 1 subfamily.

The protein resides in the cytoplasm. The catalysed reaction is CMP + ATP = CDP + ADP. It catalyses the reaction dCMP + ATP = dCDP + ADP. The polypeptide is Cytidylate kinase (Pseudomonas aeruginosa (strain UCBPP-PA14)).